Here is a 74-residue protein sequence, read N- to C-terminus: Putative membrane protein insertion efficiency factor (74 aa).

Belongs to the UPF0161 family.

It localises to the cell membrane. Its function is as follows. Could be involved in insertion of integral membrane proteins into the membrane. The protein is Putative membrane protein insertion efficiency factor of Bacillus pumilus (strain SAFR-032).